The primary structure comprises 548 residues: Multidrug efflux system permease protein Rv1217c (548 aa).

12 helical membrane passes run Val-39–Ser-59, Gly-99–Ile-119, Ala-148–Leu-168, Val-178–Ala-198, Ala-210–Ser-230, Trp-253–Leu-273, Leu-313–Ile-333, Ala-359–Leu-379, Leu-410–Leu-430, Ala-450–Leu-470, Val-477–Phe-497, and Val-521–Phe-541.

The complex is probably composed of two ATP-binding proteins (Rv1218c) and a transmembrane protein (Rv1217c).

The protein localises to the cell inner membrane. Its function is as follows. Probably part of the ABC transporter complex Rv1217c-Rv1218c involved in the resistance to a wide range of structurally unrelated drugs. Probably responsible for the translocation of the substrate across the membrane. The polypeptide is Multidrug efflux system permease protein Rv1217c (Mycobacterium tuberculosis (strain ATCC 25618 / H37Rv)).